The primary structure comprises 181 residues: Adenine phosphoribosyltransferase (181 aa).

It belongs to the purine/pyrimidine phosphoribosyltransferase family. As to quaternary structure, homodimer.

It localises to the cytoplasm. The enzyme catalyses AMP + diphosphate = 5-phospho-alpha-D-ribose 1-diphosphate + adenine. It participates in purine metabolism; AMP biosynthesis via salvage pathway; AMP from adenine: step 1/1. Catalyzes a salvage reaction resulting in the formation of AMP, that is energically less costly than de novo synthesis. This chain is Adenine phosphoribosyltransferase, found in Vibrio vulnificus (strain CMCP6).